Consider the following 448-residue polypeptide: MIDFMDYIQLTFSDATHWNRDNSYTALTDTANALLDFSIPERLRVHLSSLSTPQFATTYTLGTVGLIDGSISYLFSTLPLESTPSRSTLIPLRRLVPGYRQIHPPLAPESPNESRHAEPNERSEKALQSWRKETMLHATLHLPPPTTLNGLFLRRISPTTQLSLAVCSTQATPLSKSTPQASILTQLSHDTGKYSAEFLFSTDNALLGFKGLWNFGPDPRHAATAQRPRTASQSVSLLSAGGEMYYSPLSSVVGLSTGLRFTTLPAASESTHSSSSTHPAQSPISTFPYTLTLTLTPLTGSLSTTYSLLASPNLAFSSRFGFNVYSWESEMVAGCELWRRKKKRHASTLSDKDDLSWAKRKMGLLPPLPPSPVKGTSASAVTPAGEQKESDSVIKLRVDQSLNVRLLWEGRVKDLLVSAGVGLGPSLPSIGGTTYGWTGVGVSVLYST.

2 disordered regions span residues Gln-101–Ala-126 and Pro-366–Glu-386. A compositionally biased stretch (basic and acidic residues) spans Asn-112–Ala-126.

This sequence belongs to the MDM10 family. In terms of assembly, component of the ER-mitochondria encounter structure (ERMES) or MDM complex, composed of MMM1, MDM10, MDM12 and MDM34. Associates with the mitochondrial outer membrane sorting assembly machinery SAM(core) complex.

It is found in the mitochondrion outer membrane. Component of the ERMES/MDM complex, which serves as a molecular tether to connect the endoplasmic reticulum and mitochondria. Components of this complex are involved in the control of mitochondrial shape and protein biogenesis and may function in phospholipid exchange. MDM10 is involved in the late assembly steps of the general translocase of the mitochondrial outer membrane (TOM complex). Functions in the TOM40-specific route of the assembly of outer membrane beta-barrel proteins, including the association of TOM40 with the receptor TOM22 and small TOM proteins. Can associate with the SAM(core) complex as well as the MDM12-MMM1 complex, both involved in late steps of the major beta-barrel assembly pathway, that is responsible for biogenesis of all outer membrane beta-barrel proteins. May act as a switch that shuttles between both complexes and channels precursor proteins into the TOM40-specific pathway. Plays a role in mitochondrial morphology and in the inheritance of mitochondria. The chain is Mitochondrial distribution and morphology protein 10 from Coccidioides immitis (strain RS) (Valley fever fungus).